Consider the following 313-residue polypeptide: Proclavaminate amidinohydrolase (313 aa).

Mn(2+)-binding residues include H121, D144, H146, D148, D235, and D237.

The protein belongs to the arginase family. As to quaternary structure, homohexamer. Requires Mn(2+) as cofactor.

It catalyses the reaction amidinoproclavaminate + H2O = proclavaminate + urea. Its pathway is antibiotic biosynthesis; clavulanate biosynthesis; clavulanate from D-glyceraldehyde 3-phosphate and L-arginine: step 4/8. This chain is Proclavaminate amidinohydrolase (pah), found in Streptomyces clavuligerus.